Here is a 145-residue protein sequence, read N- to C-terminus: Regulator of sigma D (145 aa).

The protein belongs to the Rsd/AlgQ family. As to quaternary structure, interacts with RpoD.

It is found in the cytoplasm. Functionally, binds RpoD and negatively regulates RpoD-mediated transcription activation by preventing the interaction between the primary sigma factor RpoD with the catalytic core of the RNA polymerase and with promoter DNA. May be involved in replacement of the RNA polymerase sigma subunit from RpoD to RpoS during the transition from exponential growth to the stationary phase. This chain is Regulator of sigma D, found in Sodalis glossinidius (strain morsitans).